The sequence spans 317 residues: Ribosomal protein L11 methyltransferase (317 aa).

4 residues coordinate S-adenosyl-L-methionine: Thr-158, Gly-179, Asp-201, and Asn-244.

The protein belongs to the methyltransferase superfamily. PrmA family.

The protein localises to the cytoplasm. It carries out the reaction L-lysyl-[protein] + 3 S-adenosyl-L-methionine = N(6),N(6),N(6)-trimethyl-L-lysyl-[protein] + 3 S-adenosyl-L-homocysteine + 3 H(+). In terms of biological role, methylates ribosomal protein L11. The chain is Ribosomal protein L11 methyltransferase from Streptococcus agalactiae serotype III (strain NEM316).